Here is a 381-residue protein sequence, read N- to C-terminus: Subtilisin J (381 aa).

Residues 1 to 29 (MRSKKLWISLLFALTLIFTMAFSNMSVQA) form the signal peptide. A propeptide spanning residues 30 to 106 (AGKSSTEKKY…VEEDHIAHEY (77 aa)) is cleaved from the precursor. One can recognise an Inhibitor I9 domain in the interval 38 to 103 (KYIVGFKQTM…VAYVEEDHIA (66 aa)). Ca(2+) is bound at residue Q108. The Peptidase S8 domain maps to 111–380 (PYGISQIKAP…KGLINVQAAA (270 aa)). D138 acts as the Charge relay system in catalysis. Position 147 (D147) interacts with Ca(2+). Catalysis depends on H170, which acts as the Charge relay system. Ca(2+) contacts are provided by L181, N183, I185, V187, A275, Y277, and T280. S327 (charge relay system) is an active-site residue.

Belongs to the peptidase S8 family. Ca(2+) serves as cofactor.

It is found in the secreted. It carries out the reaction Hydrolysis of proteins with broad specificity for peptide bonds, and a preference for a large uncharged residue in P1. Hydrolyzes peptide amides.. In terms of biological role, subtilisin is an extracellular alkaline serine protease, it catalyzes the hydrolysis of proteins and peptide amides. The chain is Subtilisin J (aprJ) from Geobacillus stearothermophilus (Bacillus stearothermophilus).